A 308-amino-acid chain; its full sequence is tRNA pseudouridine synthase B (308 aa).

Residue Asp-49 is the Nucleophile of the active site.

Belongs to the pseudouridine synthase TruB family. Type 1 subfamily.

It catalyses the reaction uridine(55) in tRNA = pseudouridine(55) in tRNA. Functionally, responsible for synthesis of pseudouridine from uracil-55 in the psi GC loop of transfer RNAs. The chain is tRNA pseudouridine synthase B from Corynebacterium jeikeium (strain K411).